The primary structure comprises 280 residues: Pantothenate synthetase (280 aa).

31–38 (MGNLHVGH) serves as a coordination point for ATP. Catalysis depends on His38, which acts as the Proton donor. Gln62 lines the (R)-pantoate pocket. Gln62 contributes to the beta-alanine binding site. Position 150–153 (150–153 (GKKD)) interacts with ATP. A (R)-pantoate-binding site is contributed by Gln156. ATP-binding positions include Val179 and 187–190 (MSSR).

This sequence belongs to the pantothenate synthetase family. Homodimer.

The protein localises to the cytoplasm. It carries out the reaction (R)-pantoate + beta-alanine + ATP = (R)-pantothenate + AMP + diphosphate + H(+). It functions in the pathway cofactor biosynthesis; (R)-pantothenate biosynthesis; (R)-pantothenate from (R)-pantoate and beta-alanine: step 1/1. Catalyzes the condensation of pantoate with beta-alanine in an ATP-dependent reaction via a pantoyl-adenylate intermediate. This Xanthomonas oryzae pv. oryzae (strain KACC10331 / KXO85) protein is Pantothenate synthetase.